The chain runs to 193 residues: Ion-translocating oxidoreductase complex subunit B (193 aa).

The interval Met-1 to Ala-26 is hydrophobic. The 4Fe-4S domain occupies Glu-32–Val-90. Residues Cys-49, Cys-52, Cys-57, Cys-73, Cys-114, Cys-117, Cys-120, Cys-124, Cys-144, Cys-147, Cys-150, and Cys-154 each coordinate [4Fe-4S] cluster. 4Fe-4S ferredoxin-type domains follow at residues Lys-105 to Lys-134 and Met-136 to Val-164.

Belongs to the 4Fe4S bacterial-type ferredoxin family. RnfB subfamily. As to quaternary structure, the complex is composed of six subunits: RnfA, RnfB, RnfC, RnfD, RnfE and RnfG. [4Fe-4S] cluster serves as cofactor.

The protein resides in the cell inner membrane. In terms of biological role, part of a membrane-bound complex that couples electron transfer with translocation of ions across the membrane. The polypeptide is Ion-translocating oxidoreductase complex subunit B (Shewanella sp. (strain MR-4)).